Here is a 122-residue protein sequence, read N- to C-terminus: Large ribosomal subunit protein uL14 (122 aa).

The protein belongs to the universal ribosomal protein uL14 family. Part of the 50S ribosomal subunit. Forms a cluster with proteins L3 and L19. In the 70S ribosome, L14 and L19 interact and together make contacts with the 16S rRNA in bridges B5 and B8.

In terms of biological role, binds to 23S rRNA. Forms part of two intersubunit bridges in the 70S ribosome. This Citrifermentans bemidjiense (strain ATCC BAA-1014 / DSM 16622 / JCM 12645 / Bem) (Geobacter bemidjiensis) protein is Large ribosomal subunit protein uL14.